We begin with the raw amino-acid sequence, 806 residues long: Disintegrin and metalloproteinase domain-containing protein 1b (806 aa).

Residues 1–33 (MERLKLGKIPEHWCIRLVAMLLLAIIFLPSTFC) form the signal peptide. The interval 169–188 (CSVTPKDSPGDTSHPPRSRK) is disordered. Residues 203–397 (KYVEMFVVVN…HRGVCLLDEP (195 aa)) form the Peptidase M12B domain. N-linked (GlcNAc...) asparagine glycosylation occurs at Asn-224. 7 cysteine pairs are disulfide-bonded: Cys-313-Cys-392, Cys-353-Cys-376, Cys-355-Cys-361, Cys-462-Cys-482, Cys-635-Cys-647, Cys-641-Cys-653, and Cys-655-Cys-664. Residue His-338 participates in Zn(2+) binding. Glu-339 is an active-site residue. Zn(2+) contacts are provided by His-342 and His-348. 2 N-linked (GlcNAc...) asparagine glycosylation sites follow: Asn-375 and Asn-476. Positions 406–490 (AANCGNGVVE…ACPSDRKAQD (85 aa)) constitute a Disintegrin domain. Residues 631-665 (FSFPCSPSKQCNKHGVCNDLGNCHCSFGFAPPDCK) enclose the EGF-like domain. The disordered stretch occupies residues 668-694 (GTGGSVDSGPAVNLSNDSSPGPNSTQS). Asn-680, Asn-683, and Asn-690 each carry an N-linked (GlcNAc...) asparagine glycan. The span at 680-694 (NLSNDSSPGPNSTQS) shows a compositional bias: polar residues. Residues 705-725 (LIVLAVILVLMILLIIICIIS) traverse the membrane as a helical segment. Over 726–806 (AYTKSETASE…KDEDEEEGEE (81 aa)) the chain is Cytoplasmic. The disordered stretch occupies residues 735–806 (EAGPSELEEL…KDEDEEEGEE (72 aa)). Over residues 740-806 (ELEELPEGEK…KDEDEEEGEE (67 aa)) the composition is skewed to acidic residues.

In terms of assembly, heterodimer with ADAM2/fertilin subunit beta. Testis.

Its subcellular location is the membrane. May play a role in spermatogenesis and sperm maturation. In Mus musculus (Mouse), this protein is Disintegrin and metalloproteinase domain-containing protein 1b (Adam1b).